A 253-amino-acid polypeptide reads, in one-letter code: Dihydroanticapsin 7-dehydrogenase (253 aa).

Position 9–31 (leucine 9–asparagine 31) interacts with NAD(+). A substrate-binding site is contributed by serine 139. Catalysis depends on tyrosine 152, which acts as the Proton acceptor.

Belongs to the short-chain dehydrogenases/reductases (SDR) family.

It carries out the reaction L-dihydroanticapsin + NAD(+) = L-anticapsin + NADH + H(+). The protein operates within antibiotic biosynthesis; bacilysin biosynthesis. In terms of biological role, part of the bacABCDEFG operon responsible for the biosynthesis of bacilysin, an irreversible inactivator of the glutaminase domain of glucosamine synthetase. Catalyzes the dehydrogenation of the C7-hydroxyl group in the 4S-tetrahydrotyrosine (4S-H4Tyr) to yield anticapsin (epoxycyclohexanonyl-Ala). The polypeptide is Dihydroanticapsin 7-dehydrogenase (Bacillus subtilis).